A 154-amino-acid polypeptide reads, in one-letter code: Avirulence protein ATR13 (154 aa).

An N-terminal signal peptide occupies residues 1-19 (MRLVHAVLLPGIIVFVSNG). Residues 38–41 (RQLR) carry the RxLR motif. The tract at residues 50 to 92 (LSRASFGLGKAQDPLDKFFSKIIFSGKPIETSYSAKGIHEKII) is leucine heptad repeat region. Residues 93–103 (EAHDLHVSKSK) are single repeat region. The interval 104 to 154 (NAPIQYASVMEYLKKTYPGPDIERIVSTLERHDEVGAKDLGAKLRDALDRQ) is highly variable C-terminus domain.

Belongs to the RxLR effector family.

Its subcellular location is the secreted. The protein localises to the host cytoplasm. Secreted effector that acts as an elicitor of hypersensitive response (HR) specifically on plants carrying defense protein RPP13. Recognition of ATR13 by RPP13 initiates defense responses that are effective against oomycete, bacterial and viral pathogens. The allele ATR13-Emco5 recognizes RPP13-Nd, the RPP13 defense protein from Arabidopsis thaliana ecotype Niederzenz. The protein is Avirulence protein ATR13 of Hyaloperonospora arabidopsidis (Peronospora arabidopsidis).